The sequence spans 246 residues: Biosynthetic peptidoglycan transglycosylase (246 aa).

A helical transmembrane segment spans residues 27 to 47; sequence VVFCFFFAVFALLLIFRFVPI.

This sequence belongs to the glycosyltransferase 51 family.

Its subcellular location is the cell inner membrane. The enzyme catalyses [GlcNAc-(1-&gt;4)-Mur2Ac(oyl-L-Ala-gamma-D-Glu-L-Lys-D-Ala-D-Ala)](n)-di-trans,octa-cis-undecaprenyl diphosphate + beta-D-GlcNAc-(1-&gt;4)-Mur2Ac(oyl-L-Ala-gamma-D-Glu-L-Lys-D-Ala-D-Ala)-di-trans,octa-cis-undecaprenyl diphosphate = [GlcNAc-(1-&gt;4)-Mur2Ac(oyl-L-Ala-gamma-D-Glu-L-Lys-D-Ala-D-Ala)](n+1)-di-trans,octa-cis-undecaprenyl diphosphate + di-trans,octa-cis-undecaprenyl diphosphate + H(+). Its pathway is cell wall biogenesis; peptidoglycan biosynthesis. Functionally, peptidoglycan polymerase that catalyzes glycan chain elongation from lipid-linked precursors. The chain is Biosynthetic peptidoglycan transglycosylase from Haemophilus influenzae (strain ATCC 51907 / DSM 11121 / KW20 / Rd).